Here is a 174-residue protein sequence, read N- to C-terminus: Adenylosuccinate synthetase (174 aa).

GTP is bound by residues 13–19 and 41–43; these read GDEGKGK and GHT. D14 serves as the catalytic Proton acceptor. Mg(2+)-binding residues include D14 and G41. Residues 14-17, 39-42, T130, and R144 each bind IMP; these read DEGK and NAGH. Residue H42 is the Proton donor of the active site.

It belongs to the adenylosuccinate synthetase family. Homodimer. Requires Mg(2+) as cofactor.

It localises to the cytoplasm. The catalysed reaction is IMP + L-aspartate + GTP = N(6)-(1,2-dicarboxyethyl)-AMP + GDP + phosphate + 2 H(+). Its pathway is purine metabolism; AMP biosynthesis via de novo pathway; AMP from IMP: step 1/2. Its function is as follows. Plays an important role in the de novo pathway of purine nucleotide biosynthesis. Catalyzes the first committed step in the biosynthesis of AMP from IMP. This Stutzerimonas stutzeri (Pseudomonas stutzeri) protein is Adenylosuccinate synthetase.